Consider the following 141-residue polypeptide: Hemoglobin subunit alpha-A (141 aa).

Positions Val-1 to Arg-141 constitute a Globin domain. Residue His-58 participates in O2 binding. Residue His-87 participates in heme b binding.

Belongs to the globin family. As to quaternary structure, heterotetramer of two alpha chains and two beta chains. As to expression, red blood cells.

Functionally, involved in oxygen transport from the lung to the various peripheral tissues. In Eudynamys scolopaceus (Western koel), this protein is Hemoglobin subunit alpha-A (HBAA).